Consider the following 389-residue polypeptide: Stilbene synthase 3 (389 aa).

55–58 (KFQR) contacts substrate. The active site involves C164. Substrate is bound by residues L267 and 305–307 (GGR).

It belongs to the thiolase-like superfamily. Chalcone/stilbene synthases family. In terms of assembly, homodimer.

It localises to the cytoplasm. The enzyme catalyses 4-coumaroyl-CoA + 3 malonyl-CoA + 3 H(+) = trans-resveratrol + 4 CO2 + 4 CoA. It functions in the pathway phytoalexin biosynthesis; 3,4',5-trihydroxystilbene biosynthesis; 3,4',5-trihydroxystilbene from trans-4-coumarate: step 2/2. The polypeptide is Stilbene synthase 3 (Arachis hypogaea (Peanut)).